The sequence spans 285 residues: NAD kinase (285 aa).

Aspartate 66 acts as the Proton acceptor in catalysis. NAD(+)-binding positions include 66-67 (DG), 137-138 (ND), arginine 148, arginine 165, aspartate 167, and 178-183 (TAYSMS).

This sequence belongs to the NAD kinase family. A divalent metal cation serves as cofactor.

The protein localises to the cytoplasm. It carries out the reaction NAD(+) + ATP = ADP + NADP(+) + H(+). In terms of biological role, involved in the regulation of the intracellular balance of NAD and NADP, and is a key enzyme in the biosynthesis of NADP. Catalyzes specifically the phosphorylation on 2'-hydroxyl of the adenosine moiety of NAD to yield NADP. This Chlorobium luteolum (strain DSM 273 / BCRC 81028 / 2530) (Pelodictyon luteolum) protein is NAD kinase.